The primary structure comprises 274 residues: Protein bax (274 aa).

Residues 32 to 64 (TTASQKSHLTKASNKQVSSKQEYSRNSAKSSSL) are compositionally biased toward polar residues. The disordered stretch occupies residues 32-74 (TTASQKSHLTKASNKQVSSKQEYSRNSAKSSSLPDLRKYPSGT). Position 247–254 (247–254 (GYSTKGKS)) interacts with ATP.

This chain is Protein bax (bax), found in Escherichia coli (strain K12).